The primary structure comprises 345 residues: Galacturonate transporter (345 aa).

An N-terminal signal peptide occupies residues 1–32 (MFKIKGLRWYMIGLVTIGTVLGYLTRNAIAAA). Helical transmembrane passes span 49–69 (YIIA…GYVL), 76–96 (VGYA…ALAN), 100–120 (GLAV…PAGL), 139–159 (FNVG…WAIM), 165–185 (MAFL…LYFY), 237–257 (FLAE…MFKA), 265–285 (IAMF…LGGY), and 304–324 (LVVT…LFTS).

It belongs to the major facilitator superfamily. Phthalate permease family.

It localises to the cell inner membrane. The catalysed reaction is aldehydo-D-galacturonate(out) + H(+)(out) = aldehydo-D-galacturonate(in) + H(+)(in). With respect to regulation, inhibited by cyanide and 2,4-dinitrophenol, but not by arsenate. Its function is as follows. Transport of D-galacturonate. Cannot transport the dimer digalacturonic acid. Uptake is an active process. The sequence is that of Galacturonate transporter from Dickeya chrysanthemi (Pectobacterium chrysanthemi).